The primary structure comprises 434 residues: MTRILKLSHLTPQQLNQLKRRSEQNIDQALAIAKEVIEQVKMEGDAGVLHYSRQFDFAGATAENLRVSEAEFAEAEKLVDPELRRAVEHAFRNIEKVHAGQMPPPMHLAEIEPGVFAGEKITPLPTVGLYVPRGKGAFPSMMLMLAVPARVAGVKKIVVCTPPDKEGKVEPVSLVTARMAGVDEVYKLGGVQALAAIAYGTKTVSKVDKLIGPCSIYGAAAKRLLSGIVDVGLPAGPSESIVLADETTDPKLAALDLLIEAEHGSDSAALLVTHSASLAEKALGYLGEYLEKLPPWRKKFCEDGLGSYGGILLTDSLQASLDFINDYAPEHLQVLTADPLKLVGKIDNAGEILLGNYTPSSAATYAIGVNAVLPTGGFARSYSAVSVFDFLKRSTLAYLTEEGFAGVKETVTTLADYEDFPAHALAIRERENLL.

2 residues coordinate Zn(2+): glutamate 260 and histidine 263. Active-site proton acceptor residues include glutamate 330 and histidine 331. Histidine 423 is a binding site for Zn(2+).

This sequence belongs to the histidinol dehydrogenase family. It depends on Zn(2+) as a cofactor.

The enzyme catalyses L-histidinol + 2 NAD(+) + H2O = L-histidine + 2 NADH + 3 H(+). The protein operates within amino-acid biosynthesis; L-histidine biosynthesis; L-histidine from 5-phospho-alpha-D-ribose 1-diphosphate: step 9/9. Its function is as follows. Catalyzes the sequential NAD-dependent oxidations of L-histidinol to L-histidinaldehyde and then to L-histidine. The sequence is that of Histidinol dehydrogenase (hisD) from Synechocystis sp. (strain ATCC 27184 / PCC 6803 / Kazusa).